Reading from the N-terminus, the 565-residue chain is MVAEDAPVRGTCRVLFRTTTLLFLCTLLSLSISILYESLITQNQIMSQAGSTGSNSGLGSITDLLNNILSVANQIIYNSAVALPLQLDTLESTLLTAFKSLQTSDKLEQNCSWGAALINDNRYINGINQFYFSIAEGRNLTLGPLLNILSFIPTATTPEGCTRIPSFSLTKTHWCYTHNVILNGCQDHVSSNQFVSMGIIEPTSAGFPSFRTLKTLYLSDGVNRKSCSISTVPGGCMMYCFVSTQPERDDYFSAAPPEQRIIIMYYNDTIVERIINPPGVLDVWATLNPGTGSGVYYLGWVLFPIYGGVIKDTSLWNSQANKYFIPQMVAALCSQNQATQVQNAKSSYYSSWFGNRMIQSGILACPLQQDLTNECLVLPFSNDQVLMGAEGRLYMYGDSVYYYQRSNSWWPMTMLYKVTITFTNGQPSAISAQNVPTQQVPRPGTGDCSATNRCPGFCLTGVYADAWLLTNPSSTSTFGSEATFTGSYLNTATQRINPTMYIANNTQIISSQQFGSSGQEAAYGHTTCFRDTGSVMVYCIYIIELSSSLLGQFQIVPFIRQVTLS.

Over 1–19 the chain is Intravirion; that stretch reads MVAEDAPVRGTCRVLFRTT. The chain crosses the membrane as a helical span at residues 20–40; it reads TLLFLCTLLSLSISILYESLI. Over 41 to 565 the chain is Virion surface; that stretch reads TQNQIMSQAG…VPFIRQVTLS (525 aa). N-linked (GlcNAc...) asparagine; by host glycans are attached at residues Asn-110 and Asn-139. 3 cysteine pairs are disulfide-bonded: Cys-161–Cys-185, Cys-175–Cys-236, and Cys-227–Cys-240. Positions 223–228 are involved in neuraminidase activity; it reads NRKSCS. Asn-267 carries an N-linked (GlcNAc...) asparagine; by host glycan. Disulfide bonds link Cys-333–Cys-454, Cys-365–Cys-375, and Cys-448–Cys-458. N-linked (GlcNAc...) asparagine; by host glycosylation is present at Asn-504. Cys-528 and Cys-539 form a disulfide bridge.

Belongs to the paramyxoviruses hemagglutinin-neuraminidase family. As to quaternary structure, homotetramer; composed of disulfide-linked homodimers. Interacts with F protein trimer.

It is found in the virion membrane. It localises to the host cell membrane. The enzyme catalyses Hydrolysis of alpha-(2-&gt;3)-, alpha-(2-&gt;6)-, alpha-(2-&gt;8)- glycosidic linkages of terminal sialic acid residues in oligosaccharides, glycoproteins, glycolipids, colominic acid and synthetic substrates.. Functionally, attaches the virus to sialic acid-containing cell receptors and thereby initiating infection. Binding of HN protein to the receptor induces a conformational change that allows the F protein to trigger virion/cell membranes fusion. Neuraminidase activity ensures the efficient spread of the virus by dissociating the mature virions from the neuraminic acid containing glycoproteins. In Canis lupus familiaris (Dog), this protein is Hemagglutinin-neuraminidase (HN).